The primary structure comprises 369 residues: Homoserine O-succinyltransferase (369 aa).

In terms of domain architecture, AB hydrolase-1 spans 49–328; it reads NAVFICHALT…RFDSTQSARM (280 aa). Ser154 serves as the catalytic Nucleophile. Arg224 contacts substrate. Residues Asp317 and His350 contribute to the active site. Position 351 (Asp351) interacts with substrate.

It belongs to the AB hydrolase superfamily. MetX family. As to quaternary structure, homodimer.

It is found in the cytoplasm. It catalyses the reaction L-homoserine + succinyl-CoA = O-succinyl-L-homoserine + CoA. It participates in amino-acid biosynthesis; L-methionine biosynthesis via de novo pathway; O-succinyl-L-homoserine from L-homoserine: step 1/1. Its function is as follows. Transfers a succinyl group from succinyl-CoA to L-homoserine, forming succinyl-L-homoserine. This is Homoserine O-succinyltransferase from Nocardioides sp. (strain ATCC BAA-499 / JS614).